Reading from the N-terminus, the 311-residue chain is Ribosomal RNA small subunit methyltransferase H (311 aa).

S-adenosyl-L-methionine-binding positions include 33–35 (GGH), aspartate 51, phenylalanine 78, aspartate 99, and glutamine 106. The interval 289-311 (EEIEKNRRAHSAKLRAAEKLSFA) is disordered.

This sequence belongs to the methyltransferase superfamily. RsmH family.

It is found in the cytoplasm. It catalyses the reaction cytidine(1402) in 16S rRNA + S-adenosyl-L-methionine = N(4)-methylcytidine(1402) in 16S rRNA + S-adenosyl-L-homocysteine + H(+). Its function is as follows. Specifically methylates the N4 position of cytidine in position 1402 (C1402) of 16S rRNA. This Carboxydothermus hydrogenoformans (strain ATCC BAA-161 / DSM 6008 / Z-2901) protein is Ribosomal RNA small subunit methyltransferase H.